Here is a 699-residue protein sequence, read N- to C-terminus: MRLLLLLILIITINFSYGVLTPKNLAGEASEFGSFNIPNPMDVAQSSDSSLFGISMTQSQLKNSFEWSGVVPVDSEEEFTLTFFSSFPLSEFKVEASPKTSLSSSKSESEHKSKFYKVIKSIYQTPTVTNGSFGIDGATTPSFSLTWDKPVVGDWNVVITASSSLRKNEKFQKMVEDSTPQLLMLVQNPSDTHIYSYVSSYNNLFTGQKVSVLAMLHKKSEFIKKSSANRPLNWKPSPILLSDVSAEMILGLPDGSKETIPMFDDGLHDDEQANDGLFGGYINVSELGNYDLQVVYKGSQNGNGVIRSNQHLIPITSQYLELTGEVQSVQDGDANLNIYFIVNSPNQTTVDQTPVHVYSEVYGTDDDGKKVAIAWVAGVTSAQPIQGSTTTFALSAVLNERWIAKVGATAPFFVKNVQVSDLDTFIPLSNTTSTSNVKMVGEYKDVRTIVHSPPLHEITKEMRDGKMPKELADRIGKSTGNGKLILTHGYCSEGVWPIEDFENSVEFQDFNQNRGNDEFAQILANFGSQYTDGFSLVAHSQGGNAALHLVTFYFSGLDLSQKLEGRVIQSMGTPYQGTALAGTWASIGSAVGVGCSANDDLTVDGAALWLKSIPADKRALVYYTTTQYSTGSLINYCNLASNAVLEWPNDGVVDNEHTPLEGGVYLNNFKDWCHSDGMHSPQQTTNTEYNKEMSSNSVW.

The signal sequence occupies residues 1–18 (MRLLLLLILIITINFSYG). 4 N-linked (GlcNAc...) asparagine glycosylation sites follow: N130, N283, N346, and N430. The segment at 680–699 (SPQQTTNTEYNKEMSSNSVW) is disordered.

In terms of processing, N- and O-glycosylated. Post-translationally, the N-terminus is blocked.

Functionally, involved in cell density sensing and might synchronize the onset of development by triggering aggregation when a majority of the cells in a given area have starved. This chain is Conditioned medium factor (cmfA), found in Dictyostelium discoideum (Social amoeba).